The following is a 512-amino-acid chain: NAD(P)H-quinone oxidoreductase subunit 2, organellar chromatophore (512 aa).

14 consecutive transmembrane segments (helical) span residues 6-26, 43-63, 80-100, 107-127, 133-153, 168-188, 210-230, 242-262, 276-296, 304-324, 332-352, 376-396, 411-431, and 464-484; these read LLAL…LLAL, WVPP…ASQW, LAIA…MISW, GAPM…AMFL, LVSI…LAGY, LLVG…LYGL, AALA…AVPF, PTPI…ALAL, WKFL…IVAL, MLAY…VCGT, ILYL…VILF, IGLS…GFFG, LLVV…ISVI, and VALL…NPLF.

This sequence belongs to the complex I subunit 2 family. In terms of assembly, NDH-1 can be composed of about 15 different subunits; different subcomplexes with different compositions have been identified which probably have different functions.

The protein resides in the plastid. It localises to the organellar chromatophore thylakoid membrane. It catalyses the reaction a plastoquinone + NADH + (n+1) H(+)(in) = a plastoquinol + NAD(+) + n H(+)(out). It carries out the reaction a plastoquinone + NADPH + (n+1) H(+)(in) = a plastoquinol + NADP(+) + n H(+)(out). Its function is as follows. NDH-1 shuttles electrons from an unknown electron donor, via FMN and iron-sulfur (Fe-S) centers, to quinones in the respiratory and/or the photosynthetic chain. The immediate electron acceptor for the enzyme in this species is believed to be plastoquinone. Couples the redox reaction to proton translocation, and thus conserves the redox energy in a proton gradient. Cyanobacterial NDH-1 also plays a role in inorganic carbon-concentration. This is NAD(P)H-quinone oxidoreductase subunit 2, organellar chromatophore from Paulinella chromatophora.